A 154-amino-acid polypeptide reads, in one-letter code: Large ribosomal subunit protein uL13 (154 aa).

It belongs to the universal ribosomal protein uL13 family. In terms of assembly, part of the 50S ribosomal subunit.

Functionally, this protein is one of the early assembly proteins of the 50S ribosomal subunit, although it is not seen to bind rRNA by itself. It is important during the early stages of 50S assembly. The sequence is that of Large ribosomal subunit protein uL13 from Sinorhizobium medicae (strain WSM419) (Ensifer medicae).